Consider the following 338-residue polypeptide: Taste receptor type 2 member 39 (338 aa).

At 1 to 30 the chain is on the extracellular side; the sequence is MLGRCFPPNTKEKQQLRMIKLCDPAESELS. The helical transmembrane segment at 31-51 threads the bilayer; the sequence is PFLITLTLAVLLAEYLTGIIA. Over 52–74 the chain is Cytoplasmic; sequence NGFITAIHAAEWVQNKSVSTSGR. The helical transmembrane segment at 75-95 threads the bilayer; the sequence is ILVFLSVSRIALQSLMMLEIT. Residues 96–116 lie on the Extracellular side of the membrane; it reads ISSTSLSFYSEDAVYYAFKIS. A helical membrane pass occupies residues 117–137; sequence FIFLNFCSLWFAAWLSFFYFV. The Cytoplasmic portion of the chain corresponds to 138-156; that stretch reads KIANFSYPLFLKLRWRISG. A helical transmembrane segment spans residues 157–177; sequence LIPWLLWLSVFISFSHSMFCI. The Extracellular segment spans residues 178–205; sequence NICTGYCDNSFPIHSSNSTEKTYFSEIS. N194 carries an N-linked (GlcNAc...) asparagine glycan. Residues 206–226 form a helical membrane-spanning segment; that stretch reads VVSLAFFFNLGIVIPLIMFIL. Residues 227–262 are Cytoplasmic-facing; that stretch reads AAILLILSLKRHTLHMGSNATGSKDPSMEAHIGAIK. Residues 263–283 form a helical membrane-spanning segment; it reads ATSYFLILYIFNAVALFIYLS. Residues 284-291 lie on the Extracellular side of the membrane; that stretch reads NMFDINSL. Residues 292 to 312 form a helical membrane-spanning segment; it reads WNTLCQIIMAAYPASHSILLI. The Cytoplasmic segment spans residues 313–338; the sequence is KDNPGLRRAWKQLQHRLHLYPKQWTL.

This sequence belongs to the G-protein coupled receptor T2R family.

It localises to the membrane. Its function is as follows. Receptor that may play a role in the perception of bitterness and is gustducin-linked. May play a role in sensing the chemical composition of the gastrointestinal content. The activity of this receptor may stimulate alpha gustducin, mediate PLC-beta-2 activation and lead to the gating of TRPM5. The protein is Taste receptor type 2 member 39 (TAS2R39) of Macaca mulatta (Rhesus macaque).